We begin with the raw amino-acid sequence, 424 residues long: Tyrosine--tRNA ligase (424 aa).

Residue tyrosine 37 participates in L-tyrosine binding. Positions 42–51 (PTADSLHLGH) match the 'HIGH' region motif. Residues tyrosine 175 and glutamine 179 each coordinate L-tyrosine. The 'KMSKS' region motif lies at 235–239 (KFGKT). Lysine 238 serves as a coordination point for ATP. The S4 RNA-binding domain maps to 357–414 (ADLMQALVDAELQPSRGQARKTIASNAVTINGEKQSDPEYIFNDEDRLFGRYTLLRRG).

This sequence belongs to the class-I aminoacyl-tRNA synthetase family. TyrS type 1 subfamily. As to quaternary structure, homodimer.

It is found in the cytoplasm. It carries out the reaction tRNA(Tyr) + L-tyrosine + ATP = L-tyrosyl-tRNA(Tyr) + AMP + diphosphate + H(+). In terms of biological role, catalyzes the attachment of tyrosine to tRNA(Tyr) in a two-step reaction: tyrosine is first activated by ATP to form Tyr-AMP and then transferred to the acceptor end of tRNA(Tyr). This chain is Tyrosine--tRNA ligase, found in Salmonella agona (strain SL483).